A 353-amino-acid chain; its full sequence is Putative ABC transporter ATP-binding protein MG303 homolog (353 aa).

The region spanning 72 to 312 (LYFYNLSVFV…MQLLQRYEIT (241 aa)) is the ABC transporter domain. 107 to 114 (GPSGSGKT) is a binding site for ATP.

This sequence belongs to the ABC transporter superfamily.

This chain is Putative ABC transporter ATP-binding protein MG303 homolog, found in Mycoplasma pneumoniae (strain ATCC 29342 / M129 / Subtype 1) (Mycoplasmoides pneumoniae).